The primary structure comprises 191 residues: Small ribosomal subunit protein uS5 (191 aa).

The tract at residues 1 to 20 (MAAERERGGRERSRDREERD) is disordered. Residues 23–86 (FVDKLVHINR…EAAKRNLTRV (64 aa)) form the S5 DRBM domain.

The protein belongs to the universal ribosomal protein uS5 family. As to quaternary structure, part of the 30S ribosomal subunit. Contacts proteins S4 and S8.

With S4 and S12 plays an important role in translational accuracy. Functionally, located at the back of the 30S subunit body where it stabilizes the conformation of the head with respect to the body. The polypeptide is Small ribosomal subunit protein uS5 (Rhodopseudomonas palustris (strain HaA2)).